The chain runs to 302 residues: uncharacterized protein (302 aa).

Disordered stretches follow at residues arginine 15 to lysine 34, glycine 143 to leucine 195, and glycine 221 to valine 246. A compositionally biased stretch (basic and acidic residues) spans histidine 172–proline 189.

This is an uncharacterized protein from Homo sapiens (Human).